Reading from the N-terminus, the 136-residue chain is Large ribosomal subunit protein uL16c (136 aa).

It belongs to the universal ribosomal protein uL16 family. In terms of assembly, part of the 50S ribosomal subunit.

The protein localises to the plastid. It is found in the chloroplast. This is Large ribosomal subunit protein uL16c from Phaseolus angularis (Azuki bean).